An 86-amino-acid polypeptide reads, in one-letter code: Protein YwqI (86 aa).

Positions 57-83 (DYKKAVQKNIEDTKDNVDSLKEQDEAI) form a coiled coil.

The chain is Protein YwqI (ywqI) from Bacillus subtilis (strain 168).